The sequence spans 298 residues: Calcium-binding protein 1 (298 aa).

Positions 1–10 (MSSHIAKSES) are enriched in basic and acidic residues. A disordered region spans residues 1–131 (MSSHIAKSES…APAGTPEADP (131 aa)). Residue Ser2 is the site of N-myristoyl glycine attachment. His4 is lipidated: S-palmitoyl cysteine. Over residues 11–25 (KTSLLKAAAASGGSR) the composition is skewed to low complexity. EF-hand domains lie at 153–188 (EEIEELREAFREFDKDKDGYINCRDLGNCMRTMGYM), 207–224 (GHVDFDDFVELMGPKLLA), 230–265 (IGVKELRDAFREFDTNGDGEISTSELREAMRKLLGH), and 267–298 (VGHRDIEEIIRDVDLNGDGRVDFEEFVRMMSR). Ca(2+)-binding residues include Asp166, Asp168, Asp170, Tyr172, and Asp177. Residues Asp243, Asn245, Asp247, and Glu249 each contribute to the Ca(2+) site. The residue at position 251 (Ser251) is a Phosphoserine. Ca(2+) contacts are provided by Glu254, Asp280, Asn282, Asp284, Arg286, and Glu291.

As to quaternary structure, interacts with ITPR1, ITPR2 and ITPR3. The strength of this interaction inversely correlates with calcium concentration. Interacts with CACNA1A (via C-terminal CDB motif) in the pre- and postsynaptic membranes. Interacts with CACNA1C. Interacts with CACNA1D. Interacts (via EF-hands 1 and 2) at microtubules with MAP1LC3B. Interacts (via EF-hands 1 and 2) with NSMF (via the central NLS-containing motif region), the interaction occurs in a calcium dependent manner after synaptic NMDA receptor stimulation and prevents nuclear import of NSMF. Interacts with MYO1C and TRPC5. Interacts with SPACA9. In terms of processing, phosphorylated. The phosphorylation regulates the activity. Somatodendritic compartment of neurons. Restricted expression in retina to a subpopulation of amacrine, bipolar, and ganglion cells. According to PubMed:11906216, expression is heterogeneous within brain regions and their major cell types and does not match with those of marker proteins for characterized neuronal subpopulations. Isoform 2: Minor isoform expressed in the brain, in the granule cell layer of the cerebellum, at low level. Not developmentally regulated. Isoform 3: Minor isoform expressed in the brain, in the granule cell layer. of the cerebellum, at low level. Not developmentally regulated.

Its subcellular location is the cytoplasm. It localises to the cytoskeleton. Modulates calcium-dependent activity of inositol 1,4,5-triphosphate receptors (ITPRs). Inhibits agonist-induced intracellular calcium signaling. Enhances inactivation and does not support calcium-dependent facilitation of voltage-dependent P/Q-type calcium channels. Causes calcium-dependent facilitation and inhibits inactivation of L-type calcium channels by binding to the same sites as calmodulin in the C-terminal domain of CACNA1C, but has an opposite effect on channel function. Suppresses the calcium-dependent inactivation of CACNA1D. Inhibits TRPC5 channels. Prevents NMDA receptor-induced cellular degeneration. Required for the normal transfer of light signals through the retina. This is Calcium-binding protein 1 (Cabp1) from Rattus norvegicus (Rat).